A 239-amino-acid chain; its full sequence is Succinate dehydrogenase [ubiquinone] iron-sulfur subunit (239 aa).

In terms of domain architecture, 2Fe-2S ferredoxin-type spans 24–99 (AEAKFSVHPI…NANIITIYPL (76 aa)). [2Fe-2S] cluster is bound by residues cysteine 63, cysteine 68, cysteine 71, and cysteine 83. The 31-residue stretch at 142-172 (DRSELNGIYECILCACCSASCPSYWWNHDKY) folds into the 4Fe-4S ferredoxin-type domain. Residues cysteine 152, cysteine 155, and cysteine 158 each coordinate [4Fe-4S] cluster. Cysteine 162 lines the [3Fe-4S] cluster pocket. Tryptophan 167 serves as a coordination point for a ubiquinone. [3Fe-4S] cluster contacts are provided by cysteine 209 and cysteine 215. Cysteine 219 serves as a coordination point for [4Fe-4S] cluster.

This sequence belongs to the succinate dehydrogenase/fumarate reductase iron-sulfur protein family. In terms of assembly, component of complex II composed of four subunits: a flavoprotein (FP), an iron-sulfur protein (IP), and a cytochrome b composed of a large and a small subunit. The cofactor is [2Fe-2S] cluster. [3Fe-4S] cluster serves as cofactor. [4Fe-4S] cluster is required as a cofactor.

The protein localises to the mitochondrion inner membrane. The enzyme catalyses a quinone + succinate = fumarate + a quinol. It participates in carbohydrate metabolism; tricarboxylic acid cycle; fumarate from succinate (eukaryal route): step 1/1. Functionally, iron-sulfur protein (IP) subunit of succinate dehydrogenase (SDH) that is involved in complex II of the mitochondrial electron transport chain and is responsible for transferring electrons from succinate to ubiquinone (coenzyme Q). The chain is Succinate dehydrogenase [ubiquinone] iron-sulfur subunit (SDH2) from Porphyra purpurea (Red seaweed).